An 80-amino-acid chain; its full sequence is Exodeoxyribonuclease 7 small subunit (80 aa).

It belongs to the XseB family. In terms of assembly, heterooligomer composed of large and small subunits.

It localises to the cytoplasm. It catalyses the reaction Exonucleolytic cleavage in either 5'- to 3'- or 3'- to 5'-direction to yield nucleoside 5'-phosphates.. Bidirectionally degrades single-stranded DNA into large acid-insoluble oligonucleotides, which are then degraded further into small acid-soluble oligonucleotides. This chain is Exodeoxyribonuclease 7 small subunit, found in Erwinia tasmaniensis (strain DSM 17950 / CFBP 7177 / CIP 109463 / NCPPB 4357 / Et1/99).